Here is a 640-residue protein sequence, read N- to C-terminus: Leucine-rich repeat-containing protein 4C (640 aa).

Positions 1–44 are cleaved as a signal peptide; the sequence is MLNKMTLHPQQIMIGPRFNRALFDPLLVVLLALQLLVVAGLVRA. Positions 45 to 76 constitute an LRRNT domain; it reads QTCPSVCSCSNQFSKVICVRKNLREVPDGIST. 9 LRR repeats span residues 77 to 98, 101 to 122, 125 to 146, 149 to 170, 173 to 195, 198 to 219, 220 to 241, 244 to 265, and 268 to 289; these read NTRL…SFKH, HLEI…AFNG, NLNT…AFVY, KLKE…AFNR, SLRR…AFEG, NLRY…TPLI, KLDE…SFQG, HLQK…AFDN, and SLVE…LFTP. In terms of domain architecture, LRRCT spans 301–353; that stretch reads NPWNCNCDILWLSWWIKDMAPSNTACCARCNTPPNLKGRYIGELDQNYFTCYA. An Ig-like C2-type domain is found at 354–442; it reads PVIVEPPADL…GNTTASATLN (89 aa). Cys-375 and Cys-426 form a disulfide bridge. A disordered region spans residues 463–483; sequence EPSQDEARTTDNNVGPTPVVD. A helical membrane pass occupies residues 528–548; sequence IIIGCFVAITLMAAVMLVIFY. Phosphoserine is present on Ser-631.

As to quaternary structure, interacts with NTNG1 and WHRN. In terms of tissue distribution, highly expressed in the cerebral cortex, including frontal, parietal and occipital lobes. Putamen, amygdala, hippocampus and medulla oblongata show moderate expression. Caudate nucleus and thalamus express small amounts, whereas other brain regions show very weak or no expression.

The protein resides in the postsynaptic cell membrane. In terms of biological role, may promote neurite outgrowth of developing thalamic neurons. The polypeptide is Leucine-rich repeat-containing protein 4C (LRRC4C) (Homo sapiens (Human)).